We begin with the raw amino-acid sequence, 310 residues long: Olfactory receptor 7A42 (310 aa).

Topologically, residues 1 to 25 (MESGNSTRRIPSFFLLGFSENPHLQ) are extracellular. An N-linked (GlcNAc...) asparagine glycan is attached at N5. The helical transmembrane segment at 26–46 (FLIFVLFLSMYLVTVLGNLLI) threads the bilayer. Topologically, residues 47–67 (IMVIITQSPLHTPMYFFLANL) are cytoplasmic. The helical transmembrane segment at 68 to 88 (SFVDICFTSTTVPKMLVNIQT) threads the bilayer. Residues 89–100 (QSKAITYADCIS) are Extracellular-facing. A disulfide bridge connects residues C98 and C190. The chain crosses the membrane as a helical span at residues 101-121 (QMSVFLVFAELDNFLLAVMAY). Topologically, residues 122 to 135 (DRYVAICHPLYYTF) are cytoplasmic. Residues 136–156 (IVNQHLCILMVLLSWVVSILH) form a helical membrane-spanning segment. Residues 157 to 202 (AFLQSSIVLQLTFCGDVKIPHFFCELNQLSQLTCLDSLSSHLIMNL) lie on the Extracellular side of the membrane. A helical transmembrane segment spans residues 203 to 223 (VPVLLAVISFSSILYSYFKIV). At 224–240 (SSICSISSVQGKYTAFS) the chain is on the cytoplasmic side. The chain crosses the membrane as a helical span at residues 241–261 (TCVSHLSIVFLFYSTGLGVYV). Residues 262–272 (SSAVVQSSHSA) are Extracellular-facing. Residues 273-293 (ARASVMYTVVTPMLNPFIYSL) form a helical membrane-spanning segment. The Cytoplasmic portion of the chain corresponds to 294–310 (RNKDVKKALERLLEGKL).

It belongs to the G-protein coupled receptor 1 family.

The protein localises to the cell membrane. Its function is as follows. Odorant receptor. The protein is Olfactory receptor 7A42 of Mus musculus (Mouse).